A 186-amino-acid polypeptide reads, in one-letter code: Probable GPI-anchored cupredoxin ARB_05732-1 (186 aa).

An N-terminal signal peptide occupies residues 1 to 18 (MVNMNILTTVALAGLAAA). H55 is a binding site for Cu cation. C66 and C104 are joined by a disulfide. Residue N87 is glycosylated (N-linked (GlcNAc...) asparagine). Residues C98 and H103 each contribute to the Cu cation site. A disordered region spans residues 130–160 (GAGNGQAPSRVNNGSSGSGTPTSGGAPAATS). N142 carries N-linked (GlcNAc...) asparagine glycosylation. Positions 143 to 160 (GSSGSGTPTSGGAPAATS) are enriched in low complexity. G153 carries the GPI-anchor amidated glycine lipid modification. A propeptide spans 154 to 186 (GAPAATSPNAASSLTFSGAAALVAMGGAWIGLL) (removed in mature form).

This sequence belongs to the multicopper oxidase family. It depends on Cu cation as a cofactor.

It is found in the cell membrane. Its subcellular location is the secreted. Probable electron transfer copper protein that serves as a direct electron donor. In Arthroderma benhamiae (strain ATCC MYA-4681 / CBS 112371) (Trichophyton mentagrophytes), this protein is Probable GPI-anchored cupredoxin ARB_05732-1.